The sequence spans 955 residues: Probable autotransporter YcgV (955 aa).

The disordered stretch occupies residues 616-659; sequence ASGTVPEPTPNPEPTPAPAQPPIVNPDPTPEPAPTPKPTTTADA. Residues 622-652 are compositionally biased toward pro residues; the sequence is EPTPNPEPTPAPAQPPIVNPDPTPEPAPTPK. The region spanning 687-955 is the Autotransporter domain; it reads NQSKDGNIWL…QVNGGYRFSF (269 aa).

Functionally, upon overexpression shows increased adherence to polyvinyl chloride (PVC) plates, increased mature biofilm formation. This chain is Probable autotransporter YcgV (ycgV), found in Escherichia coli (strain K12).